A 55-amino-acid chain; its full sequence is ATP synthase F(0) complex subunit 8 (55 aa).

The chain crosses the membrane as a helical span at residues 10–32 (FFTMLTTWLTFLLLIQPKLLSFI).

It belongs to the ATPase protein 8 family. In terms of assembly, component of the ATP synthase complex composed at least of ATP5F1A/subunit alpha, ATP5F1B/subunit beta, ATP5MC1/subunit c (homooctomer), MT-ATP6/subunit a, MT-ATP8/subunit 8, ATP5ME/subunit e, ATP5MF/subunit f, ATP5MG/subunit g, ATP5MK/subunit k, ATP5MJ/subunit j, ATP5F1C/subunit gamma, ATP5F1D/subunit delta, ATP5F1E/subunit epsilon, ATP5PF/subunit F6, ATP5PB/subunit b, ATP5PD/subunit d, ATP5PO/subunit OSCP. ATP synthase complex consists of a soluble F(1) head domain (subunits alpha(3) and beta(3)) - the catalytic core - and a membrane F(0) domain - the membrane proton channel (subunits c, a, 8, e, f, g, k and j). These two domains are linked by a central stalk (subunits gamma, delta, and epsilon) rotating inside the F1 region and a stationary peripheral stalk (subunits F6, b, d, and OSCP).

It is found in the mitochondrion membrane. Subunit 8, of the mitochondrial membrane ATP synthase complex (F(1)F(0) ATP synthase or Complex V) that produces ATP from ADP in the presence of a proton gradient across the membrane which is generated by electron transport complexes of the respiratory chain. ATP synthase complex consist of a soluble F(1) head domain - the catalytic core - and a membrane F(1) domain - the membrane proton channel. These two domains are linked by a central stalk rotating inside the F(1) region and a stationary peripheral stalk. During catalysis, ATP synthesis in the catalytic domain of F(1) is coupled via a rotary mechanism of the central stalk subunits to proton translocation. In vivo, can only synthesize ATP although its ATP hydrolase activity can be activated artificially in vitro. Part of the complex F(0) domain. This Guira guira (Guira cuckoo) protein is ATP synthase F(0) complex subunit 8.